Here is a 273-residue protein sequence, read N- to C-terminus: Thiazole synthase (273 aa).

The active-site Schiff-base intermediate with DXP is lysine 110. Residues glycine 171, 198–199, and 220–221 contribute to the 1-deoxy-D-xylulose 5-phosphate site; these read AG and NS.

The protein belongs to the ThiG family. In terms of assembly, homotetramer. Forms heterodimers with either ThiH or ThiS.

It localises to the cytoplasm. It catalyses the reaction [ThiS sulfur-carrier protein]-C-terminal-Gly-aminoethanethioate + 2-iminoacetate + 1-deoxy-D-xylulose 5-phosphate = [ThiS sulfur-carrier protein]-C-terminal Gly-Gly + 2-[(2R,5Z)-2-carboxy-4-methylthiazol-5(2H)-ylidene]ethyl phosphate + 2 H2O + H(+). It functions in the pathway cofactor biosynthesis; thiamine diphosphate biosynthesis. Its function is as follows. Catalyzes the rearrangement of 1-deoxy-D-xylulose 5-phosphate (DXP) to produce the thiazole phosphate moiety of thiamine. Sulfur is provided by the thiocarboxylate moiety of the carrier protein ThiS. In vitro, sulfur can be provided by H(2)S. In Hydrogenovibrio crunogenus (strain DSM 25203 / XCL-2) (Thiomicrospira crunogena), this protein is Thiazole synthase.